A 376-amino-acid chain; its full sequence is Putative type I restriction enzyme MpnIIP endonuclease subunit N-terminal part (376 aa).

Functionally, the N-terminal section of a putative type I restriction enzyme that if reconstituted might recognize 5'-GAN(7)TAY-3' and cleave a random distance away. Subunit R is required for both nuclease and ATPase activities, but not for modification. The chain is Putative type I restriction enzyme MpnIIP endonuclease subunit N-terminal part from Mycoplasma pneumoniae (strain ATCC 29342 / M129 / Subtype 1) (Mycoplasmoides pneumoniae).